Reading from the N-terminus, the 89-residue chain is Small ribosomal subunit protein uS15 (89 aa).

Belongs to the universal ribosomal protein uS15 family. In terms of assembly, part of the 30S ribosomal subunit. Forms a bridge to the 50S subunit in the 70S ribosome, contacting the 23S rRNA.

Functionally, one of the primary rRNA binding proteins, it binds directly to 16S rRNA where it helps nucleate assembly of the platform of the 30S subunit by binding and bridging several RNA helices of the 16S rRNA. In terms of biological role, forms an intersubunit bridge (bridge B4) with the 23S rRNA of the 50S subunit in the ribosome. This is Small ribosomal subunit protein uS15 from Klebsiella pneumoniae (strain 342).